A 172-amino-acid polypeptide reads, in one-letter code: Shikimate kinase (172 aa).

Residue glycine 14 to threonine 19 participates in ATP binding. Serine 18 lines the Mg(2+) pocket. The substrate site is built by aspartate 36, arginine 60, and glycine 82. Arginine 120 is an ATP binding site. Arginine 139 is a binding site for substrate. Glutamine 156 lines the ATP pocket.

It belongs to the shikimate kinase family. In terms of assembly, monomer. Requires Mg(2+) as cofactor.

The protein resides in the cytoplasm. It catalyses the reaction shikimate + ATP = 3-phosphoshikimate + ADP + H(+). It functions in the pathway metabolic intermediate biosynthesis; chorismate biosynthesis; chorismate from D-erythrose 4-phosphate and phosphoenolpyruvate: step 5/7. Its function is as follows. Catalyzes the specific phosphorylation of the 3-hydroxyl group of shikimic acid using ATP as a cosubstrate. The polypeptide is Shikimate kinase (Vibrio campbellii (strain ATCC BAA-1116)).